The following is a 455-amino-acid chain: MWGGRFDEGIDARMARFNNSFPFDQRMWREDIRGSMAWARQLAQAGVISTEERDTLLTGLETVFAEFANDRFEARPTDEDIHTAIERRLGELVGAVAGKLHTGRSRNDQVATDVRLWTMGAIQRIDDGVRALQQALLTQAEAAGDALMPGYTHLQRAQPVLLAHWLLSHFWSAQRDRERLTDCAKRTSVLPLGSGAIAGTPLAIDRAALAADLGMAAISPNSIDAVSDRDFVAEFLFCAALIGIHLSRLAEDMIIYSSAEFGFVVLADAYSTGSSLMPQKKNPDSFELLRGKAGRLTGDLVTVLTVLKGIPSAYDKDLQEDKEPLFDAADTLELALPVAAGAVATARFRHDRMRAALDDAMLATDAADYLVARGVPFREAHHVVGRLVREAEQRGVALSALPLDILLAAHPACGSDILQVFDMDRSAAQRRVPGATAPGSVREQIIRARQCLGEH.

Belongs to the lyase 1 family. Argininosuccinate lyase subfamily.

It is found in the cytoplasm. It carries out the reaction 2-(N(omega)-L-arginino)succinate = fumarate + L-arginine. It functions in the pathway amino-acid biosynthesis; L-arginine biosynthesis; L-arginine from L-ornithine and carbamoyl phosphate: step 3/3. This Roseiflexus castenholzii (strain DSM 13941 / HLO8) protein is Argininosuccinate lyase.